Here is a 543-residue protein sequence, read N- to C-terminus: ATP-dependent ubiquitin transferase-like protein Cap2 (543 aa).

The segment at 1–159 (MSSAAAVADV…QNCIVAHANG (159 aa)) is E2-like domain. Residue cysteine 84 is the For E2-like domain of the active site. The linker domain stretch occupies residues 160-305 (CPLWFITDNE…YLAQRNMPNS (146 aa)). Residues 306–543 (KTLAGKNIAV…RDRECPLCNS (238 aa)) form an adenylation plus E1-like domain region. Active-site for E1-like domain residues include cysteine 450 and cysteine 453.

This sequence in the C-terminal section; belongs to the HesA/MoeB/ThiF family. As to quaternary structure, forms a Cap2-CdnA complex. A Cap2 dimer is bound on either side by a CdnA monomer.

Its function is as follows. CD-NTase priming component of a CBASS antiviral system. CBASS (cyclic oligonucleotide-based antiphage signaling system) provides immunity against bacteriophages. The CD-NTase protein (CdnA) synthesizes cyclic nucleotides in response to infection; these serve as specific second messenger signals. The signals activate a diverse range of effectors, leading to bacterial cell death and thus abortive phage infection. A type II-A(GA) CBASS system. Functionally, acts as a protein transferase, conjugating CdnA, the CD-NTase, to unidentified target(s) in the cell probably via an E1-E2 ubiquitin transferase-like mechanism. This primes CdnA, upon phage infection CdnA activates and makes cyclic nucleotides. Protein conjugation requires ATP. The capV-cdnA-cap2-cap3 operon provides about 10(4)-fold protection in strain BWHPSA011 against infection by phage PaMx41. In P.aeruginosa strain PAO1 it confers protection against phages PaMx41 and JBD18 but not JBD67 (JBD18 and JBD67 do not replicate in BWHPSA011 / Pa011). When acb2 in JBD67 is deleted this CBASS operon then protects against JDB67 also. This CBASS system limits prophage induction of lysogenized JBD67 as well as viral lytic replication. In Pseudomonas aeruginosa (strain BWHPSA011 / Pa011), this protein is ATP-dependent ubiquitin transferase-like protein Cap2.